Consider the following 198-residue polypeptide: Ribonuclease HII (198 aa).

One can recognise an RNase H type-2 domain in the interval 10 to 198 (QLVAGVDEVG…PVKRALGLAS (189 aa)). Residues Asp-16, Glu-17, and Asp-108 each contribute to the a divalent metal cation site.

Belongs to the RNase HII family. The cofactor is Mn(2+). It depends on Mg(2+) as a cofactor.

It is found in the cytoplasm. The catalysed reaction is Endonucleolytic cleavage to 5'-phosphomonoester.. Functionally, endonuclease that specifically degrades the RNA of RNA-DNA hybrids. In Escherichia coli O6:H1 (strain CFT073 / ATCC 700928 / UPEC), this protein is Ribonuclease HII.